The following is a 596-amino-acid chain: Elongation factor 4 (596 aa).

Positions 2 to 184 constitute a tr-type G domain; that stretch reads KHIRNFSIIA…MIVKDVPPPV (183 aa). Residues 14 to 19 and 131 to 134 each bind GTP; these read DHGKST and NKID.

It belongs to the TRAFAC class translation factor GTPase superfamily. Classic translation factor GTPase family. LepA subfamily.

The protein localises to the cell inner membrane. The enzyme catalyses GTP + H2O = GDP + phosphate + H(+). Its function is as follows. Required for accurate and efficient protein synthesis under certain stress conditions. May act as a fidelity factor of the translation reaction, by catalyzing a one-codon backward translocation of tRNAs on improperly translocated ribosomes. Back-translocation proceeds from a post-translocation (POST) complex to a pre-translocation (PRE) complex, thus giving elongation factor G a second chance to translocate the tRNAs correctly. Binds to ribosomes in a GTP-dependent manner. This chain is Elongation factor 4, found in Pseudoalteromonas translucida (strain TAC 125).